Here is a 102-residue protein sequence, read N- to C-terminus: Small ribosomal subunit protein uS10 (102 aa).

Residues 37 to 61 (PIPLPTKSLKITTRKSTDGEGSSSF) are disordered.

Belongs to the universal ribosomal protein uS10 family. As to quaternary structure, part of the 30S ribosomal subunit.

Involved in the binding of tRNA to the ribosomes. The chain is Small ribosomal subunit protein uS10 from Methanococcus vannielii (strain ATCC 35089 / DSM 1224 / JCM 13029 / OCM 148 / SB).